Here is a 446-residue protein sequence, read N- to C-terminus: Phosphoglucosamine mutase (446 aa).

Ser-99 (phosphoserine intermediate) is an active-site residue. The Mg(2+) site is built by Ser-99, Asp-242, Asp-244, and Asp-246. Ser-99 is modified (phosphoserine).

This sequence belongs to the phosphohexose mutase family. Mg(2+) is required as a cofactor. Activated by phosphorylation.

The enzyme catalyses alpha-D-glucosamine 1-phosphate = D-glucosamine 6-phosphate. Catalyzes the conversion of glucosamine-6-phosphate to glucosamine-1-phosphate. This is Phosphoglucosamine mutase from Campylobacter hominis (strain ATCC BAA-381 / DSM 21671 / CCUG 45161 / LMG 19568 / NCTC 13146 / CH001A).